Consider the following 459-residue polypeptide: MARVMTAQIRQYTTPIDTSVPDSKRKYIPSSGTYPRGFRVSGTHVGVKPSNTTFPDLALISSDEPCSAAAVFTTNRFQAAPVQVSKQILEAREGRGIRGVVVNAGCANAVTGKGGLEDAKSMSAKVDECNGLNSTGGQGDSSTLVMSTGVIGQRLPIQKILSGIPTGYSNLSSTHAAWLKTARAICTTDTFPKLVSQTFTLPSSPDRTYHIAGMTKGAGMIHPNMATLLGIICTDAPIAPSALQSLLTHAVSRSFNSISIDGDTSTNDTVALLANGAAGGQPISSPTSPEYTAMQSILTGFAQSLAQLVVRDGEGATKFVTVRVQNSPSHSDAKLIASTIARSPLVKTALYGKDANWGRILCAAGYTQGLSPGTLVPERTSVSFKPVDGSAELKLVVNGEPEVVDEERAAAILQDEDLEIVVDLGGGNQGEAAKGGEDALYWFCDFSHEYVTINGDYRT.

Residues Thr-187, Lys-216, Thr-227, Glu-314, Asn-454, and Thr-459 each coordinate substrate. Thr-227 (nucleophile) is an active-site residue.

This sequence belongs to the ArgJ family. Heterodimer of an alpha and a beta chain. The alpha and beta chains are autoproteolytically processed from a single precursor protein within the mitochondrion.

The protein resides in the mitochondrion matrix. The enzyme catalyses N(2)-acetyl-L-ornithine + L-glutamate = N-acetyl-L-glutamate + L-ornithine. It carries out the reaction L-glutamate + acetyl-CoA = N-acetyl-L-glutamate + CoA + H(+). It participates in amino-acid biosynthesis; L-arginine biosynthesis; L-ornithine and N-acetyl-L-glutamate from L-glutamate and N(2)-acetyl-L-ornithine (cyclic): step 1/1. The protein operates within amino-acid biosynthesis; L-arginine biosynthesis; N(2)-acetyl-L-ornithine from L-glutamate: step 1/4. Catalyzes two activities which are involved in the cyclic version of arginine biosynthesis: the synthesis of acetylglutamate from glutamate and acetyl-CoA, and of ornithine by transacetylation between acetylornithine and glutamate. The protein is Arginine biosynthesis bifunctional protein ArgJ, mitochondrial of Uncinocarpus reesii (strain UAMH 1704).